The chain runs to 905 residues: DNA mismatch repair protein MutS (905 aa).

The interval Glu-389–Pro-410 is disordered. Gly-638–Ser-645 is an ATP binding site. The segment at Arg-826–Pro-847 is disordered. Residues Gly-831–Thr-840 show a composition bias toward polar residues.

This sequence belongs to the DNA mismatch repair MutS family.

In terms of biological role, this protein is involved in the repair of mismatches in DNA. It is possible that it carries out the mismatch recognition step. This protein has a weak ATPase activity. This chain is DNA mismatch repair protein MutS, found in Nitratidesulfovibrio vulgaris (strain ATCC 29579 / DSM 644 / CCUG 34227 / NCIMB 8303 / VKM B-1760 / Hildenborough) (Desulfovibrio vulgaris).